The chain runs to 416 residues: Tyrosine aminotransferase (416 aa).

At Lys253 the chain carries N6-(pyridoxal phosphate)lysine.

Belongs to the class-I pyridoxal-phosphate-dependent aminotransferase family. Homodimer. Pyridoxal 5'-phosphate is required as a cofactor. In terms of processing, the N-terminus is blocked.

It is found in the cytoplasm. The protein resides in the mitochondrion. It carries out the reaction L-tyrosine + 2-oxoglutarate = 3-(4-hydroxyphenyl)pyruvate + L-glutamate. The protein operates within amino-acid degradation; L-phenylalanine degradation; acetoacetate and fumarate from L-phenylalanine: step 2/6. Functionally, transaminase involved in tyrosine breakdown. Converts tyrosine to p-hydroxyphenylpyruvate. The chain is Tyrosine aminotransferase from Trypanosoma cruzi.